Consider the following 354-residue polypeptide: Inactive ADP-ribosyltransferase ARH2 (354 aa).

S27 bears the Phosphoserine mark.

This sequence belongs to the ADP-ribosylglycohydrolase family.

The protein localises to the cytoplasm. It localises to the myofibril. It is found in the sarcomere. Functionally, required for myofibril assembly and outgrowth of the cardiac chambers in the developing heart. Appears to be catalytically inactive, showing no activity against O-acetyl-ADP-ribose. The protein is Inactive ADP-ribosyltransferase ARH2 (ADPRHL1) of Pongo abelii (Sumatran orangutan).